The sequence spans 176 residues: Adenine phosphoribosyltransferase (176 aa).

It belongs to the purine/pyrimidine phosphoribosyltransferase family. In terms of assembly, homodimer.

The protein localises to the cytoplasm. The catalysed reaction is AMP + diphosphate = 5-phospho-alpha-D-ribose 1-diphosphate + adenine. It participates in purine metabolism; AMP biosynthesis via salvage pathway; AMP from adenine: step 1/1. Its function is as follows. Catalyzes a salvage reaction resulting in the formation of AMP, that is energically less costly than de novo synthesis. The chain is Adenine phosphoribosyltransferase from Thermobifida fusca (strain YX).